Here is a 164-residue protein sequence, read N- to C-terminus: ATP synthase subunit b (164 aa).

A helical transmembrane segment spans residues 8–28; the sequence is FGIIFWQTITLLFVLFILGKF.

The protein belongs to the ATPase B chain family. As to quaternary structure, F-type ATPases have 2 components, F(1) - the catalytic core - and F(0) - the membrane proton channel. F(1) has five subunits: alpha(3), beta(3), gamma(1), delta(1), epsilon(1). F(0) has three main subunits: a(1), b(2) and c(10-14). The alpha and beta chains form an alternating ring which encloses part of the gamma chain. F(1) is attached to F(0) by a central stalk formed by the gamma and epsilon chains, while a peripheral stalk is formed by the delta and b chains.

It localises to the cell membrane. F(1)F(0) ATP synthase produces ATP from ADP in the presence of a proton or sodium gradient. F-type ATPases consist of two structural domains, F(1) containing the extramembraneous catalytic core and F(0) containing the membrane proton channel, linked together by a central stalk and a peripheral stalk. During catalysis, ATP synthesis in the catalytic domain of F(1) is coupled via a rotary mechanism of the central stalk subunits to proton translocation. Functionally, component of the F(0) channel, it forms part of the peripheral stalk, linking F(1) to F(0). This Amoebophilus asiaticus (strain 5a2) protein is ATP synthase subunit b.